A 339-amino-acid chain; its full sequence is Protein H339R (339 aa).

The protein belongs to the asfivirus H339R family. In terms of assembly, interacts with host NACA (alpha chain of nascent polypeptide-associated complex).

It localises to the host cytoplasm. It is found in the host nucleus. The polypeptide is Protein H339R (African swine fever virus (isolate Tick/Malawi/Lil 20-1/1983) (ASFV)).